The following is a 554-amino-acid chain: Hydroxylamine reductase (554 aa).

The [2Fe-2S] cluster site is built by Cys-3, Cys-6, Cys-18, and Cys-25. Residues His-252, Glu-276, Cys-320, Cys-408, Cys-436, Cys-461, Glu-495, and Lys-497 each contribute to the hybrid [4Fe-2O-2S] cluster site. Cys-408 carries the post-translational modification Cysteine persulfide.

The protein belongs to the HCP family. [2Fe-2S] cluster serves as cofactor. The cofactor is hybrid [4Fe-2O-2S] cluster.

It localises to the cytoplasm. It catalyses the reaction A + NH4(+) + H2O = hydroxylamine + AH2 + H(+). In terms of biological role, catalyzes the reduction of hydroxylamine to form NH(3) and H(2)O. The chain is Hydroxylamine reductase from Shewanella sp. (strain MR-7).